The following is a 147-amino-acid chain: uncharacterized protein (147 aa).

The HTH LytTR-type domain maps to 44–147 (LVGYIDKEIH…LKSIKERLSI (104 aa)).

It localises to the cytoplasm. This is an uncharacterized protein from Staphylococcus aureus (strain Mu50 / ATCC 700699).